We begin with the raw amino-acid sequence, 486 residues long: Cardiolipin synthase A (486 aa).

Helical transmembrane passes span 3–23 (TFYTVISWLSVFGYWLLIAGV) and 38–58 (MAWLLIIYILPLVGIIAYLSF). 2 PLD phosphodiesterase domains span residues 219-246 (MDLRQHRKIVLIDNYVAYTGSMNMVDPR) and 399-426 (EGGLLHSKSVLVDGQLSLVGTVNLDMRS). Residues histidine 224, lysine 226, aspartate 231, histidine 404, lysine 406, and aspartate 411 contribute to the active site.

The protein belongs to the phospholipase D family. Cardiolipin synthase subfamily. ClsA sub-subfamily.

It localises to the cell inner membrane. It catalyses the reaction 2 a 1,2-diacyl-sn-glycero-3-phospho-(1'-sn-glycerol) = a cardiolipin + glycerol. In terms of biological role, catalyzes the reversible phosphatidyl group transfer from one phosphatidylglycerol molecule to another to form cardiolipin (CL) (diphosphatidylglycerol) and glycerol. This chain is Cardiolipin synthase A, found in Yersinia pseudotuberculosis serotype O:1b (strain IP 31758).